The chain runs to 272 residues: Glutamate racemase (272 aa).

Substrate is bound by residues 9–10 (DS) and 41–42 (YG). The active-site Proton donor/acceptor is the Cys-73. 74–75 (NT) lines the substrate pocket. Cys-183 serves as the catalytic Proton donor/acceptor. 184 to 185 (TH) contributes to the substrate binding site.

It belongs to the aspartate/glutamate racemases family.

It carries out the reaction L-glutamate = D-glutamate. It functions in the pathway cell wall biogenesis; peptidoglycan biosynthesis. Functionally, provides the (R)-glutamate required for cell wall biosynthesis. The polypeptide is Glutamate racemase (Shewanella sp. (strain MR-7)).